Here is a 328-residue protein sequence, read N- to C-terminus: Phosphate acyltransferase (328 aa).

This sequence belongs to the PlsX family. As to quaternary structure, homodimer. Probably interacts with PlsY.

It localises to the cytoplasm. The enzyme catalyses a fatty acyl-[ACP] + phosphate = an acyl phosphate + holo-[ACP]. It functions in the pathway lipid metabolism; phospholipid metabolism. Catalyzes the reversible formation of acyl-phosphate (acyl-PO(4)) from acyl-[acyl-carrier-protein] (acyl-ACP). This enzyme utilizes acyl-ACP as fatty acyl donor, but not acyl-CoA. This Mycoplasma genitalium (strain ATCC 33530 / DSM 19775 / NCTC 10195 / G37) (Mycoplasmoides genitalium) protein is Phosphate acyltransferase.